The primary structure comprises 60 residues: Small integral membrane protein 3 (60 aa).

A helical membrane pass occupies residues I20–C40.

It localises to the membrane. This is Small integral membrane protein 3 (Smim3) from Rattus norvegicus (Rat).